The following is a 312-amino-acid chain: Plasminogen activator (312 aa).

The first 20 residues, 1-20, serve as a signal peptide directing secretion; that stretch reads MKKSSIVATIITILSGSANA. The Periplasmic portion of the chain corresponds to 21-31; the sequence is ASSQLIPNISP. A beta stranded membrane pass occupies residues 32–40; it reads DSFTVAAST. At 41–70 the chain is on the extracellular side; sequence GMLSGKSHEMLYDAETGRKISQLDWKIKNV. A beta stranded membrane pass occupies residues 71 to 80; the sequence is AILKGDISWD. Over 81–84 the chain is Periplasmic; sequence PYSF. The chain crosses the membrane as a beta stranded span at residues 85 to 94; the sequence is LTLNARGWTS. At 95–131 the chain is on the extracellular side; that stretch reads LASGSGNMDDYDWMNENQSEWTDHSSHPATNVNHANE. Residues D104 and D106 contribute to the active site. The chain crosses the membrane as a beta stranded span at residues 132–140; the sequence is YDLNVKGWL. Residues 141-145 lie on the Periplasmic side of the membrane; it reads LQDEN. Residues 146 to 154 form a beta stranded membrane-spanning segment; the sequence is YKAGITAGY. At 155-194 the chain is on the extracellular side; the sequence is QETRFSWTATGGSYSYNNGAYTGNFPKGVRVIGYNQRFSM. A beta stranded transmembrane segment spans residues 195–204; it reads PYIGLAGQYR. At 205–207 the chain is on the periplasmic side; that stretch reads IND. A beta stranded transmembrane segment spans residues 208–216; the sequence is FELNALFKF. Topologically, residues 217 to 244 are extracellular; it reads SDWVRAHDNDEHYMRDLTFREKTSGSRY. Residues D226 and H228 contribute to the active site. Residues 245–255 form a beta stranded membrane-spanning segment; the sequence is YGTVINAGYYV. The Periplasmic segment spans residues 256–258; the sequence is TPN. The chain crosses the membrane as a beta stranded span at residues 259-267; it reads AKVFAEFTY. The Extracellular portion of the chain corresponds to 268-301; the sequence is SKYDEGKGGTQTIDKNSGDSVSIGGDAAGISNKN. The beta stranded transmembrane segment at 302 to 312 threads the bilayer; that stretch reads YTVTAGLQYRF.

This sequence belongs to the peptidase A26 family.

It localises to the cell outer membrane. The catalysed reaction is Converts human Glu-plasminogen to plasmin by cleaving the 560-Arg-|-Val-561 peptide bond that is also hydrolyzed by the mammalian u-plasminogen activator and t-plasminogen activator. Also cleaves arginyl bonds in other proteins.. With respect to regulation, requires bacterial lipopolysaccharide (LPS) for activation; addition of LPS to inactive protein reactivates it. In the absence of LPS the active site groove is slightly narrower, and peptide substrate binds deep within the active site groove, displacing the nucleophilic water molecule. Its function is as follows. In the mammalian host activates (cleaves) plasminogen to generate the serine protease plasmin. Plasmin degrades fibrin clots (fibrinolysis) and facilitates bacterial cell migration, enabling rapid dissemination of bacteria from the initial site of infection. Cleaves host plasminogen to generate plasmin and probably also has autocatalytic activity. Fibrinolytic activity prevails at 37 degrees Celsius whereas coagulase expression predominates at lower temperatures (28 degrees Celsius). Cleaves plasminogen; plasminogen cleavage is much higher than coagulase activity. This is Plasminogen activator from Yersinia pestis.